The primary structure comprises 490 residues: Subtilisin-like protease 8 (490 aa).

A signal peptide spans 1-26 (MKGLLSLSVLPVLAYASPMIVDSIHQ). Positions 27–134 (NAAPILSSTN…YIERDSEVHT (108 aa)) are excised as a propeptide. The 92-residue stretch at 43–134 (SYIVVFKKGV…YIERDSEVHT (92 aa)) folds into the Inhibitor I9 domain. The Peptidase S8 domain occupies 144 to 450 (PWGLARISHR…GGSDDYKKII (307 aa)). Catalysis depends on charge relay system residues Asp180 and His212. N-linked (GlcNAc...) asparagine glycosylation is present at Asn282. Ser378 serves as the catalytic Charge relay system. Asn456 is a glycosylation site (N-linked (GlcNAc...) asparagine).

This sequence belongs to the peptidase S8 family.

The protein localises to the secreted. Its function is as follows. Secreted subtilisin-like serine protease with keratinolytic activity that contributes to pathogenicity. In Arthroderma benhamiae (strain ATCC MYA-4681 / CBS 112371) (Trichophyton mentagrophytes), this protein is Subtilisin-like protease 8 (SUB8).